The primary structure comprises 316 residues: ATP synthase gamma chain (316 aa).

It belongs to the ATPase gamma chain family. F-type ATPases have 2 components, CF(1) - the catalytic core - and CF(0) - the membrane proton channel. CF(1) has five subunits: alpha(3), beta(3), gamma(1), delta(1), epsilon(1). CF(0) has three main subunits: a, b and c.

It localises to the cellular thylakoid membrane. Produces ATP from ADP in the presence of a proton gradient across the membrane. The gamma chain is believed to be important in regulating ATPase activity and the flow of protons through the CF(0) complex. The protein is ATP synthase gamma chain of Parasynechococcus marenigrum (strain WH8102).